A 97-amino-acid polypeptide reads, in one-letter code: Small ribosomal subunit protein bS20 (97 aa).

Belongs to the bacterial ribosomal protein bS20 family.

Binds directly to 16S ribosomal RNA. The polypeptide is Small ribosomal subunit protein bS20 (Gloeothece citriformis (strain PCC 7424) (Cyanothece sp. (strain PCC 7424))).